A 479-amino-acid chain; its full sequence is Protoheme IX farnesyltransferase (479 aa).

Residues Met1 to Leu207 are unknown. A run of 4 helical transmembrane segments spans residues Leu20–Val40, Ile64–Val84, Val98–Val118, and Leu128–Ala148. The span at Thr155–Thr164 shows a compositional bias: low complexity. The interval Thr155–Ala186 is disordered. 9 helical membrane passes run Leu207–Gly227, Pro231–Phe251, Leu271–Ile291, Ala303–Leu322, Pro324–Gly344, Trp345–Leu365, His402–Ala422, Leu423–Ile443, and His459–Ile479. Residues Met208–Thr476 form a protoheme IX prenyltransferase region.

In the C-terminal section; belongs to the UbiA prenyltransferase family. Protoheme IX farnesyltransferase subfamily.

The protein resides in the cell membrane. The enzyme catalyses heme b + (2E,6E)-farnesyl diphosphate + H2O = Fe(II)-heme o + diphosphate. It participates in porphyrin-containing compound metabolism; heme O biosynthesis; heme O from protoheme: step 1/1. Converts heme B (protoheme IX) to heme O by substitution of the vinyl group on carbon 2 of heme B porphyrin ring with a hydroxyethyl farnesyl side group. In Haloquadratum walsbyi (strain DSM 16790 / HBSQ001), this protein is Protoheme IX farnesyltransferase (ctaB).